A 97-amino-acid chain; its full sequence is Signal recognition particle 19 kDa protein (97 aa).

It belongs to the SRP19 family. In terms of assembly, part of the signal recognition particle protein translocation system, which is composed of SRP and FtsY. Archaeal SRP consists of a 7S RNA molecule of 300 nucleotides and two protein subunits: SRP54 and SRP19.

It is found in the cytoplasm. Functionally, involved in targeting and insertion of nascent membrane proteins into the cytoplasmic membrane. Binds directly to 7S RNA and mediates binding of the 54 kDa subunit of the SRP. This chain is Signal recognition particle 19 kDa protein, found in Methanocella arvoryzae (strain DSM 22066 / NBRC 105507 / MRE50).